The sequence spans 525 residues: GMP synthase [glutamine-hydrolyzing] (525 aa).

In terms of domain architecture, Glutamine amidotransferase type-1 spans 9-207 (RILILDFGSQ…VLDICGCAAL (199 aa)). Cys-86 acts as the Nucleophile in catalysis. Residues His-181 and Glu-183 contribute to the active site. A GMPS ATP-PPase domain is found at 208–400 (WTPSNIVDDA…LGLPYDMVYR (193 aa)). Residue 235 to 241 (SGGVDSS) participates in ATP binding.

In terms of assembly, homodimer.

The enzyme catalyses XMP + L-glutamine + ATP + H2O = GMP + L-glutamate + AMP + diphosphate + 2 H(+). It participates in purine metabolism; GMP biosynthesis; GMP from XMP (L-Gln route): step 1/1. Catalyzes the synthesis of GMP from XMP. This is GMP synthase [glutamine-hydrolyzing] from Pseudomonas aeruginosa (strain LESB58).